The primary structure comprises 170 residues: Protein SprT (170 aa).

Residues Arg-19–Arg-163 form the SprT-like domain. His-78 is a binding site for Zn(2+). Glu-79 is an active-site residue. His-82 lines the Zn(2+) pocket.

Belongs to the SprT family. Requires Zn(2+) as cofactor.

It localises to the cytoplasm. The protein is Protein SprT of Erwinia tasmaniensis (strain DSM 17950 / CFBP 7177 / CIP 109463 / NCPPB 4357 / Et1/99).